Here is a 78-residue protein sequence, read N- to C-terminus: Small ribosomal subunit protein bS16 (78 aa).

It belongs to the bacterial ribosomal protein bS16 family.

The chain is Small ribosomal subunit protein bS16 from Thermodesulfovibrio yellowstonii (strain ATCC 51303 / DSM 11347 / YP87).